We begin with the raw amino-acid sequence, 253 residues long: 5'-nucleotidase SurE (253 aa).

Residues D8, D9, S39, and N96 each coordinate a divalent metal cation.

Belongs to the SurE nucleotidase family. It depends on a divalent metal cation as a cofactor.

The protein resides in the cytoplasm. The catalysed reaction is a ribonucleoside 5'-phosphate + H2O = a ribonucleoside + phosphate. In terms of biological role, nucleotidase that shows phosphatase activity on nucleoside 5'-monophosphates. The polypeptide is 5'-nucleotidase SurE (Rhodopirellula baltica (strain DSM 10527 / NCIMB 13988 / SH1)).